A 463-amino-acid polypeptide reads, in one-letter code: Nitrate/nitrite antiporter NarK (463 aa).

Over 1 to 37 the chain is Cytoplasmic; sequence MSHSSAPERATGAVITDWRPEDPAFWQQRGQRIASRN. The chain crosses the membrane as a helical span at residues 38-59; sequence LWISVPCLLLAFCVWMLFSAVA. Over 60–73 the chain is Periplasmic; it reads VNLPKVGFNFTTDQ. A helical membrane pass occupies residues 74-95; the sequence is LFMLTALPSVSGALLRVPYSFM. Arginine 89 is a binding site for nitrate. Residue arginine 89 participates in nitrite binding. Residues 96–102 lie on the Cytoplasmic side of the membrane; sequence VPIFGGR. Residues 103–122 form a helical membrane-spanning segment; sequence RWTAFSTGILIIPCVWLGFA. Residues 123–130 are Periplasmic-facing; sequence VQDTSTPY. Residues 131–151 form a helical membrane-spanning segment; sequence SVFIIISLLCGFAGANFASSM. Residues 152–166 are Cytoplasmic-facing; the sequence is ANISFFFPKQKQGGA. The helical transmembrane segment at 167–189 threads the bilayer; it reads LGLNGGLGNMGVSVMQLVAPLVV. A nitrate-binding site is contributed by asparagine 175. The Periplasmic segment spans residues 190–211; it reads SLSIFAVFGSQGVKQPDGTELY. The helical transmembrane segment at 212–233 threads the bilayer; the sequence is LANASWIWVPFLAIFTIAAWFG. Residues 234 to 253 lie on the Cytoplasmic side of the membrane; the sequence is MNDLATSKASIKEQLPVLKR. The helical transmembrane segment at 254–281 threads the bilayer; it reads GHLWIMSLLYLATFGSFIGFSAGFAMLS. A nitrate-binding site is contributed by tyrosine 263. Tyrosine 263 is a binding site for nitrite. Residues 282–289 lie on the Periplasmic side of the membrane; that stretch reads KTQFPDVQ. The chain crosses the membrane as a helical span at residues 290 to 312; the sequence is ILQYAFFGPFIGALARSAGGALS. The Cytoplasmic portion of the chain corresponds to 313-316; that stretch reads DRLG. Residues 317-338 form a helical membrane-spanning segment; sequence GTRVTLVNFILMAIFSGLLFLT. The Periplasmic portion of the chain corresponds to 339–347; it reads LPTDGQGGS. Residues 348–373 form a helical membrane-spanning segment; the sequence is FMAFFAVFLALFLTAGLGSGSTFQMI. Over 374 to 405 the chain is Cytoplasmic; sequence SVIFRKLTMDRVKAEGGSDERAMREAATDTAA. A helical transmembrane segment spans residues 406-427; it reads ALGFISAIGAIGGFFIPKAFGS. Position 411 (serine 411) interacts with nitrate. Residues 428–435 are Periplasmic-facing; it reads SLALTGSP. The chain crosses the membrane as a helical span at residues 436-458; the sequence is VGAMKVFLIFYIACVVITWAVYG. The Cytoplasmic segment spans residues 459 to 463; sequence RHSKK.

This sequence belongs to the major facilitator superfamily. Nitrate/nitrite porter (TC 2.A.1.8) family.

The protein resides in the cell inner membrane. It carries out the reaction nitrate(in) + nitrite(out) = nitrate(out) + nitrite(in). Catalyzes nitrate uptake, nitrite uptake and nitrite export across the cytoplasmic membrane. Functions as a nitrate/nitrite exchanger, and protons are unlikely to be co-transported. This chain is Nitrate/nitrite antiporter NarK, found in Escherichia coli (strain K12).